The sequence spans 356 residues: S-adenosylmethionine:tRNA ribosyltransferase-isomerase (356 aa).

It belongs to the QueA family. As to quaternary structure, monomer.

The protein resides in the cytoplasm. The enzyme catalyses 7-aminomethyl-7-carbaguanosine(34) in tRNA + S-adenosyl-L-methionine = epoxyqueuosine(34) in tRNA + adenine + L-methionine + 2 H(+). The protein operates within tRNA modification; tRNA-queuosine biosynthesis. Its function is as follows. Transfers and isomerizes the ribose moiety from AdoMet to the 7-aminomethyl group of 7-deazaguanine (preQ1-tRNA) to give epoxyqueuosine (oQ-tRNA). The chain is S-adenosylmethionine:tRNA ribosyltransferase-isomerase from Xanthomonas campestris pv. campestris (strain 8004).